The sequence spans 492 residues: Glycogen synthase 1 (492 aa).

Lys15 is an ADP-alpha-D-glucose binding site.

It belongs to the glycosyltransferase 1 family. Bacterial/plant glycogen synthase subfamily.

It catalyses the reaction [(1-&gt;4)-alpha-D-glucosyl](n) + ADP-alpha-D-glucose = [(1-&gt;4)-alpha-D-glucosyl](n+1) + ADP + H(+). It participates in glycan biosynthesis; glycogen biosynthesis. Synthesizes alpha-1,4-glucan chains using ADP-glucose. This is Glycogen synthase 1 from Trichormus variabilis (strain ATCC 29413 / PCC 7937) (Anabaena variabilis).